The following is a 643-amino-acid chain: Phosphomethylpyrimidine synthase (643 aa).

Substrate contacts are provided by residues N248, M277, Y306, H342, 362 to 364 (SRG), 403 to 406 (DGLR), and E442. A Zn(2+)-binding site is contributed by H446. Y469 contributes to the substrate binding site. H510 contributes to the Zn(2+) binding site. [4Fe-4S] cluster is bound by residues C590, C593, and C598.

The protein belongs to the ThiC family. Homodimer. [4Fe-4S] cluster serves as cofactor.

It catalyses the reaction 5-amino-1-(5-phospho-beta-D-ribosyl)imidazole + S-adenosyl-L-methionine = 4-amino-2-methyl-5-(phosphooxymethyl)pyrimidine + CO + 5'-deoxyadenosine + formate + L-methionine + 3 H(+). It participates in cofactor biosynthesis; thiamine diphosphate biosynthesis. Its function is as follows. Catalyzes the synthesis of the hydroxymethylpyrimidine phosphate (HMP-P) moiety of thiamine from aminoimidazole ribotide (AIR) in a radical S-adenosyl-L-methionine (SAM)-dependent reaction. This Burkholderia mallei (strain NCTC 10247) protein is Phosphomethylpyrimidine synthase.